The primary structure comprises 807 residues: Serine/threonine-protein kinase B-raf (807 aa).

Composition is skewed to low complexity over residues 1 to 15 and 110 to 128; these read MAALSSGSSAEGASL and SVSSSASTDTVASSSSSSL. 2 disordered regions span residues 1–36 and 104–128; these read MAALSSGSSAEGASLFNGDMEPEPPPPVLGACYAGS and GNGTDFSVSSSASTDTVASSSSSSL. An RBD domain is found at 155–227; that stretch reads PIVRVFLPNK…TGEELHVEVL (73 aa). The Phorbol-ester/DAG-type zinc finger occupies 234–280; sequence THNFVRKTFFTLAFCDFCRKLLFQGFRCQTCGYKFHQRCSTEVPLMC. 8 residues coordinate Zn(2+): H235, C248, C251, C261, C264, H269, C272, and C280. The span at 303-313 shows a compositional bias: polar residues; sequence EETTLGETTPA. Disordered regions lie at residues 303 to 372 and 434 to 494; these read EETT…VHIN and STAG…EIPD. The span at 314 to 328 shows a compositional bias: low complexity; the sequence is SGSYPSVPPSDSVGP. 2 stretches are compositionally biased toward basic and acidic residues: residues 348–363 and 463–487; these read PADEDHRNQFGQRDRS and QRERKSSSSSEDRNRMKTLGRRDSS. In terms of domain architecture, Protein kinase spans 497 to 757; sequence ITVGQRIGSG…PQILASIELL (261 aa). ATP is bound by residues 503–511 and K523; that span reads IGSGSFGTV. D616 acts as the Proton acceptor in catalysis. Phosphoserine; by MAPK1 is present on S790. Residue T793 is modified to Phosphothreonine; by MAPK1.

This sequence belongs to the protein kinase superfamily. TKL Ser/Thr protein kinase family. RAF subfamily. It depends on Zn(2+) as a cofactor. In terms of processing, phosphorylated. As to expression, expressed preferentially in neural tissue.

It localises to the nucleus. The protein resides in the cytoplasm. It is found in the cell membrane. It carries out the reaction L-seryl-[protein] + ATP = O-phospho-L-seryl-[protein] + ADP + H(+). The enzyme catalyses L-threonyl-[protein] + ATP = O-phospho-L-threonyl-[protein] + ADP + H(+). With respect to regulation, in quiescent cells, maintained in an inactive state via an intramolecular interaction between the protein kinase and N-terminal domains. Following mitogen-mediated cell activation, binds via its RGB domain to active HRAS (GTP-bound) which releases the inhibitory intramolecular interaction between the two domains. This allows the MAP2K1-mediated dimerization of KSR1 or KSR2, and BRAF which activates BRAF. Protein kinase involved in the activation of the MAP signaling cascade. May play a role in transducing specific signals in neural cells. This is Serine/threonine-protein kinase B-raf from Coturnix japonica (Japanese quail).